Consider the following 162-residue polypeptide: Proepiregulin (162 aa).

The first 22 residues, 1 to 22 (METFPAAWVLALLCLGSHLLQA), serve as a signal peptide directing secretion. A propeptide spanning residues 23-55 (VISTTVIPSCIPEESEDNCTALVQMEDDPRVAQ) is cleaved from the precursor. Asparagine 40 is a glycosylation site (N-linked (GlcNAc...) asparagine). Positions 57–97 (LITKCSSDMDGYCLHGHCIYLVDMSEKYCRCEVGYTGLRCE) constitute an EGF-like domain. Disulfide bonds link cysteine 61–cysteine 74, cysteine 69–cysteine 85, and cysteine 87–cysteine 96. The propeptide at 102 to 162 (TVHQPLSREY…TSGGPGLPQV (61 aa)) is removed in mature form. A helical transmembrane segment spans residues 113 to 133 (ALTVILVFLFLIVTAGSMYYF).

As to quaternary structure, interacts with EGFR and ERBB4.

It localises to the secreted. The protein localises to the extracellular space. The protein resides in the cell membrane. In terms of biological role, ligand of the EGF receptor/EGFR and ERBB4. Stimulates EGFR and ERBB4 tyrosine phosphorylation. Contributes to inflammation, wound healing, tissue repair, and oocyte maturation by regulating angiogenesis and vascular remodeling and by stimulating cell proliferation. In Rattus norvegicus (Rat), this protein is Proepiregulin (Ereg).